Consider the following 567-residue polypeptide: Organic cation transporter-like protein (567 aa).

At 1 to 21 the chain is on the cytoplasmic side; it reads MGYDEAIIHLGDFGRYQKIIY. Residues 22 to 42 form a helical membrane-spanning segment; sequence FLICLTSIPVAFHKLAGVFLL. Residues 43–127 lie on the Extracellular side of the membrane; the sequence is AKPDFRCALP…TEWNLVCGRD (85 aa). N-linked (GlcNAc...) asparagine glycosylation is found at Asn55, Asn67, Asn89, and Asn97. Residues 128-148 traverse the membrane as a helical segment; it reads FMAATSDSLFMLGVLLGSIVF. The Cytoplasmic segment spans residues 149–158; sequence GQLSDKYGRK. The helical transmembrane segment at 159 to 179 threads the bilayer; the sequence is PILFASLVIQVLFGVLAGVAP. Over 180 to 189 the chain is Extracellular; the sequence is EYFTYTFARL. The chain crosses the membrane as a helical span at residues 190–210; sequence MVGATTSGVFLVAYVVAMEMV. Over 211–219 the chain is Cytoplasmic; sequence GPDKRLYAG. The helical transmembrane segment at 220-240 threads the bilayer; that stretch reads IFVMMFFSVGFMLTAVFAYFV. Over 241-244 the chain is Extracellular; sequence HDWR. A helical membrane pass occupies residues 245 to 265; that stretch reads WLQIALTLPGLIFMFYYWIIP. Topologically, residues 266–343 are cytoplasmic; sequence ESARWLLLKG…LFCYPNLRRK (78 aa). The disordered stretch occupies residues 304-326; it reads LDEGENSEEKAKQKLEDQELDEG. Positions 310 to 320 are enriched in basic and acidic residues; the sequence is SEEKAKQKLED. Residues 344–364 form a helical membrane-spanning segment; the sequence is TLLIFLDWLVTSGVYYGLSWN. Residues 365-371 lie on the Extracellular side of the membrane; that stretch reads TSNLGGN. The helical transmembrane segment at 372–392 threads the bilayer; that stretch reads VLLNFVISGAVEIPAYIFLLL. Residues 393 to 400 are Cytoplasmic-facing; it reads TLNRWGRR. A helical membrane pass occupies residues 401–421; the sequence is SILCGCLVMAGLSLLATVIIP. Residues 422 to 427 are Extracellular-facing; sequence QRMHTL. The helical transmembrane segment at 428–448 threads the bilayer; that stretch reads IVACAMLGKLAITASYGTVYI. The Cytoplasmic portion of the chain corresponds to 449 to 462; sequence FSAEQFPTVVRNVA. A helical membrane pass occupies residues 463–483; that stretch reads LGAASMVARISGMMAPFLNFL. At 484–489 the chain is on the extracellular side; sequence ATIWKP. A helical membrane pass occupies residues 490–510; it reads LPLLICGSLTLVAGLLSLLLP. Topologically, residues 511 to 567 are cytoplasmic; the sequence is ETHNKPMLETIADGERFGKKTKADVYLETGQELRAPEAQPLKGSGETNGSTIANGHK. Residues 546 to 567 form a disordered region; sequence PEAQPLKGSGETNGSTIANGHK. Polar residues predominate over residues 555–567; the sequence is GETNGSTIANGHK.

This sequence belongs to the major facilitator (TC 2.A.1) superfamily. Organic cation transporter (TC 2.A.1.19) family.

It localises to the membrane. Probably transports organic cations. This Drosophila melanogaster (Fruit fly) protein is Organic cation transporter-like protein (Orct2).